A 144-amino-acid polypeptide reads, in one-letter code: Cytochrome c-type biogenesis protein CcmE (144 aa).

Topologically, residues 1 to 7 (MKPRHKR) are cytoplasmic. Residues 8–28 (ALIIIAALIAIGVAALLILNA) traverse the membrane as a helical; Signal-anchor for type II membrane protein segment. Over 29-144 (LNSNIALYVT…DQAQKNGSAK (116 aa)) the chain is Periplasmic. H121 and Y125 together coordinate heme.

It belongs to the CcmE/CycJ family.

Its subcellular location is the cell inner membrane. Its function is as follows. Heme chaperone required for the biogenesis of c-type cytochromes. Transiently binds heme delivered by CcmC and transfers the heme to apo-cytochromes in a process facilitated by CcmF and CcmH. The protein is Cytochrome c-type biogenesis protein CcmE of Polynucleobacter necessarius subsp. necessarius (strain STIR1).